Consider the following 451-residue polypeptide: Probable plasmid replicative DNA helicase (451 aa).

In terms of domain architecture, SF4 helicase spans 194–451 (QNSFFDAFPT…SKFSAIKKVW (258 aa)). ATP is bound at residue 225 to 232 (ARPSIGKT).

It belongs to the helicase family. DnaB subfamily. Homohexamer.

It catalyses the reaction Couples ATP hydrolysis with the unwinding of duplex DNA at the replication fork by translocating in the 5'-3' direction. This creates two antiparallel DNA single strands (ssDNA). The leading ssDNA polymer is the template for DNA polymerase III holoenzyme which synthesizes a continuous strand.. The catalysed reaction is ATP + H2O = ADP + phosphate + H(+). Its function is as follows. A replicative DNA helicase, it participates in initiation and elongation during DNA replication. Travels ahead of the DNA replisome, separating dsDNA into templates for DNA synthesis. A processive ATP-dependent 5'-3' DNA helicase it has DNA-dependent ATPase activity. The plasmid this protein is encoded on is thought to be required for growth within mammalian cells. This is Probable plasmid replicative DNA helicase from Chlamydia trachomatis serovar L2 (strain ATCC VR-902B / DSM 19102 / 434/Bu).